The following is a 335-amino-acid chain: MGKLDIIEKKGTERLKRGFAKMVKGGVIMDVTNAEQARIAEEAGAVAVMALHRVPADIRKAGGVARMAPIEKIQEIMDAVTIPVMAKVRIGHVAEARILEALGVDMIDESEVLTPSDPYFHIDKREFKIPFVCGNRNLGEAVRRIWEGAAMMRTKGEAGTGNIIEAVRHVRLLKDNIALLQRMTDEQIYGVAEKFAEPYLRLAFEVREISGLPKQVLENEPVYGHYTYREIVEGLYKILLEIKKLGRLPVVNFAAGGVATPADAALMMQMGMDGVFVGSGIFKSSNPPKMARAIVEAVNHWDEPDVLVEISKEIGEPMRGQDIEELEVRLEERGV.

D-ribose 5-phosphate is bound at residue Asp-30. Lys-87 (schiff-base intermediate with D-ribose 5-phosphate) is an active-site residue. Gly-159 lines the D-ribose 5-phosphate pocket. Arg-171 contributes to the D-glyceraldehyde 3-phosphate binding site. D-ribose 5-phosphate contacts are provided by residues Gly-257 and 278-279 (GS).

Belongs to the PdxS/SNZ family. In terms of assembly, in the presence of PdxT, forms a dodecamer of heterodimers.

It catalyses the reaction aldehydo-D-ribose 5-phosphate + D-glyceraldehyde 3-phosphate + L-glutamine = pyridoxal 5'-phosphate + L-glutamate + phosphate + 3 H2O + H(+). The protein operates within cofactor biosynthesis; pyridoxal 5'-phosphate biosynthesis. In terms of biological role, catalyzes the formation of pyridoxal 5'-phosphate from ribose 5-phosphate (RBP), glyceraldehyde 3-phosphate (G3P) and ammonia. The ammonia is provided by the PdxT subunit. Can also use ribulose 5-phosphate and dihydroxyacetone phosphate as substrates, resulting from enzyme-catalyzed isomerization of RBP and G3P, respectively. This Thermococcus gammatolerans (strain DSM 15229 / JCM 11827 / EJ3) protein is Pyridoxal 5'-phosphate synthase subunit PdxS.